A 326-amino-acid polypeptide reads, in one-letter code: Mitochondrial glycine transporter (326 aa).

3 Solcar repeats span residues 45–134 (HPVI…SKQY), 141–225 (PTAL…TRTA), and 237–321 (LIPL…MMAR). The next 6 helical transmembrane spans lie at 51 to 76 (FLCG…TRLQ), 109 to 135 (GMSP…KQYF), 147 to 172 (VILG…TRYE), 200 to 223 (GLTA…SQTR), 241 to 267 (INFS…KTHM), and 296 to 314 (GSVP…AWTV).

It belongs to the mitochondrial carrier (TC 2.A.29) family. SLC25A38 subfamily.

It is found in the mitochondrion inner membrane. It carries out the reaction glycine(in) = glycine(out). Its function is as follows. Mitochondrial glycine transporter that imports glycine into the mitochondrial matrix. Plays an important role in providing glycine for the first enzymatic step in heme biosynthesis, the condensation of glycine with succinyl-CoA to produce 5-aminolevulinate (ALA) in the mitochondrial matrix. Required during erythropoiesis. Plays a role as pro-apoptotic protein that induces caspase-dependent apoptosis. This is Mitochondrial glycine transporter from Mus musculus (Mouse).